The chain runs to 98 residues: NADH-ubiquinone oxidoreductase chain 4L (98 aa).

The next 3 helical transmembrane spans lie at 1 to 21, 29 to 49, and 61 to 81; these read MTMV…GLLM, SLLC…ITIL, and IILL…LVMV.

It belongs to the complex I subunit 4L family. In terms of assembly, core subunit of respiratory chain NADH dehydrogenase (Complex I) which is composed of 45 different subunits.

The protein resides in the mitochondrion inner membrane. It catalyses the reaction a ubiquinone + NADH + 5 H(+)(in) = a ubiquinol + NAD(+) + 4 H(+)(out). In terms of biological role, core subunit of the mitochondrial membrane respiratory chain NADH dehydrogenase (Complex I) which catalyzes electron transfer from NADH through the respiratory chain, using ubiquinone as an electron acceptor. Part of the enzyme membrane arm which is embedded in the lipid bilayer and involved in proton translocation. This Ommatophoca rossii (Ross seal) protein is NADH-ubiquinone oxidoreductase chain 4L (MT-ND4L).